A 504-amino-acid chain; its full sequence is Sphingosine-1-phosphate transporter SPNS2 (504 aa).

11 consecutive transmembrane segments (helical) span residues 48–70, 94–114, 122–142, 182–202, 214–234, 269–289, 317–337, 351–371, 375–395, 415–435, and 460–480; these read LLRC…LNYM, GLLQ…FGYL, IILS…SFIT, VMLS…YILG, WALR…LIFV, VFSS…GIWI, LIFG…GAVT, LVCA…FVVA, IVGA…NWAI, FQGF…IGLI, and LCPF…LFFL.

Belongs to the major facilitator superfamily. Spinster (TC 2.A.1.49) family.

The protein localises to the cell membrane. Its subcellular location is the endosome membrane. It catalyses the reaction sphing-4-enine 1-phosphate(in) = sphing-4-enine 1-phosphate(out). The catalysed reaction is sphinganine 1-phosphate(in) = sphinganine 1-phosphate(out). Functionally, lipid transporter that specifically mediates export of sphingosine-1-phosphate (sphing-4-enine 1-phosphate, S1P) and sphinganine-1-phosphate, which play critical roles in regulating heart development. Mediates the export of S1P from cells in the extraembryonic yolk syncytial layer (YSL), thereby regulating myocardial precursor migration. In Danio rerio (Zebrafish), this protein is Sphingosine-1-phosphate transporter SPNS2.